A 390-amino-acid chain; its full sequence is L-seryl-tRNA(Sec) selenium transferase (390 aa).

An N6-(pyridoxal phosphate)lysine modification is found at lysine 225.

Belongs to the SelA family. Pyridoxal 5'-phosphate serves as cofactor.

The protein resides in the cytoplasm. It catalyses the reaction L-seryl-tRNA(Sec) + selenophosphate + H(+) = L-selenocysteinyl-tRNA(Sec) + phosphate. It functions in the pathway aminoacyl-tRNA biosynthesis; selenocysteinyl-tRNA(Sec) biosynthesis; selenocysteinyl-tRNA(Sec) from L-seryl-tRNA(Sec) (bacterial route): step 1/1. Functionally, converts seryl-tRNA(Sec) to selenocysteinyl-tRNA(Sec) required for selenoprotein biosynthesis. This is L-seryl-tRNA(Sec) selenium transferase from Helicobacter pylori (strain J99 / ATCC 700824) (Campylobacter pylori J99).